The following is a 588-amino-acid chain: Probable G-protein coupled receptor 162 (588 aa).

The Extracellular portion of the chain corresponds to 1-17 (MARGGLGAEEASLRSNA). Residues 18–38 (LSWLACGLLALLANAWIILSI) traverse the membrane as a helical segment. At 39-49 (SAKQQKHKPLE) the chain is on the cytoplasmic side. A helical membrane pass occupies residues 50–70 (LLLCFLAGTHILMAAVPLTTF). The Extracellular portion of the chain corresponds to 71–91 (AVVQLRRQASSDYDWNESICK). A glycan (N-linked (GlcNAc...) asparagine) is linked at asparagine 86. The helical transmembrane segment at 92 to 112 (VFVSTYYTLALATCFTVASLS) threads the bilayer. The Cytoplasmic segment spans residues 113-133 (YHRMWMVRWPVNYRLSNAKKQ). Residues 134–154 (ALHAVMGIWMVSFILSTLPSI) traverse the membrane as a helical segment. At 155–174 (GWHNNGERYYARGCQFIVSK) the chain is on the extracellular side. A helical membrane pass occupies residues 175 to 195 (IGLGFGVCFSLLLLGGIVMGL). Over 196 to 275 (VCVAITFYQT…SLQVTNLVSA (80 aa)) the chain is Cytoplasmic. The chain crosses the membrane as a helical span at residues 276 to 296 (IVFLYDSLTGVPILVVSFFSL). The Extracellular segment spans residues 297–303 (KSDSAPP). A helical transmembrane segment spans residues 304–324 (WMVLAVLWCSMAQTLLLPSFI). Residues 325 to 588 (WSCERYRADV…GNPIFPQLTL (264 aa)) are Cytoplasmic-facing. Phosphoserine is present on residues serine 413 and serine 435. Disordered regions lie at residues 511 to 545 (ETPL…SPDS) and 561 to 588 (SLTG…QLTL). Residues 514 to 525 (LPSPTASPGPSP) show a composition bias toward pro residues. The span at 530-540 (PLGFSPRRLSL) shows a compositional bias: low complexity.

It belongs to the G-protein coupled receptor 1 family.

The protein resides in the cell membrane. In terms of biological role, orphan receptor. This Mus musculus (Mouse) protein is Probable G-protein coupled receptor 162 (Gpr162).